A 130-amino-acid polypeptide reads, in one-letter code: Phosphoribosyl-AMP cyclohydrolase (130 aa).

Mg(2+) is bound at residue D77. C78 is a binding site for Zn(2+). Mg(2+)-binding residues include D79 and D81. 2 residues coordinate Zn(2+): C95 and C102.

This sequence belongs to the PRA-CH family. Homodimer. Mg(2+) is required as a cofactor. The cofactor is Zn(2+).

It localises to the cytoplasm. The catalysed reaction is 1-(5-phospho-beta-D-ribosyl)-5'-AMP + H2O = 1-(5-phospho-beta-D-ribosyl)-5-[(5-phospho-beta-D-ribosylamino)methylideneamino]imidazole-4-carboxamide. It participates in amino-acid biosynthesis; L-histidine biosynthesis; L-histidine from 5-phospho-alpha-D-ribose 1-diphosphate: step 3/9. Its function is as follows. Catalyzes the hydrolysis of the adenine ring of phosphoribosyl-AMP. This is Phosphoribosyl-AMP cyclohydrolase from Pseudomonas savastanoi pv. phaseolicola (strain 1448A / Race 6) (Pseudomonas syringae pv. phaseolicola (strain 1448A / Race 6)).